The chain runs to 577 residues: Torulene dioxygenase (577 aa).

Positions 1 to 20 (MALNGPGVYHRTREHEQEDA) are disordered. Positions 239, 291, 361, and 570 each coordinate Fe(2+).

This sequence belongs to the carotenoid oxygenase family. Fe(2+) serves as cofactor.

Its subcellular location is the cytoplasm. The protein resides in the cytosol. The enzyme catalyses torulene + O2 = 4'-apo-beta-carotenal + 3-methyl-2-butenal. It functions in the pathway carotenoid biosynthesis. In terms of biological role, torulene dioxygenase; part of pathway that mediates the biosynthesis of neurosporaxanthin, a carboxylic apocarotenoid acting as an essential protective pigments and leading to orange pigmentation. CarT mediates the cleavage of torulene into beta-apo-4'-carotenal, the aldehyde corresponding to the acidic neurosporaxanthin. Is also active on other monocyclic synthetic substrates such as beta-apo-8'-carotenal and beta-apo-10'-carotenal to produce beta-apo-14'-carotenal and retinal(beta-apo-15'-carotenal), respectively. Neurosporaxanthin is synthesized from geranyl-geranyl pyrophosphate (GGPP) through several enzymatic activities. Phytoene synthase activity performed by the bifunctional enzyme carAR first produces phytoene from geranyl-geranyl pyrophosphate (GGPP). The phytoene dehydrogenase carB then introduces 4 desaturations to lead to lycopene which is substrate of the carotene cyclase activity of carAR that leads to the production of gamma-carotene. CarB then performs a 5th desaturation reaction to yield torulene. Torulene is the substrate of the dioxidase carT that breaks the molecule, removing five carbon atoms to yield beta-apo-4'-carotenal, whereas the aldehyde dehydrogenase carD mediates the last step by converting beta-apo-4'-carotenal into neurosporaxanthin. In Gibberella fujikuroi (strain CBS 195.34 / IMI 58289 / NRRL A-6831) (Bakanae and foot rot disease fungus), this protein is Torulene dioxygenase.